A 611-amino-acid polypeptide reads, in one-letter code: Leukotriene A-4 hydrolase (611 aa).

At K73 the chain carries N6-acetyllysine. Residues 135–137 (QCQ) and 267–272 (PYGGME) each bind a peptide. Residue H296 participates in Zn(2+) binding. Residue E297 is the Proton acceptor of the active site. Positions 300 and 319 each coordinate Zn(2+). Residue K337 is modified to N6-acetyllysine. The active-site Proton donor is Y384. Residue K414 is modified to N6-acetyllysine. S416 is subject to Phosphoserine. 564–566 (RMK) is a binding site for a peptide. The residue at position 573 (K573) is an N6-acetyllysine.

This sequence belongs to the peptidase M1 family. In terms of assembly, monomer. Zn(2+) serves as cofactor. Phosphorylation at Ser-416 inhibits leukotriene-A4 hydrolase activity.

Its subcellular location is the cytoplasm. The enzyme catalyses leukotriene A4 + H2O = leukotriene B4. It catalyses the reaction (5S,6S)-epoxy-(18R)-hydroxy-(7E,9E,11Z,14Z,16E)-eicosapentaenoate + H2O = resolvin E1. The catalysed reaction is (5S,6S)-epoxy-(18S)-hydroxy-(7E,9E,11Z,14Z,16E)-eicosapentaenoate + H2O = 18S-resolvin E1. It carries out the reaction Release of the N-terminal residue from a tripeptide.. It participates in lipid metabolism; leukotriene B4 biosynthesis. Inhibited by bestatin. The epoxide hydrolase activity is restrained by suicide inactivation that involves binding of LTA4 to Tyr-379. 4-(4-benzylphenyl)thiazol-2-amine (ARM1) selectively inhibits the epoxide hydrolase activity. Its function is as follows. Bifunctional zinc metalloenzyme that comprises both epoxide hydrolase (EH) and aminopeptidase activities. Acts as an epoxide hydrolase to catalyze the conversion of LTA4 to the pro-inflammatory mediator leukotriene B4 (LTB4). Also has aminopeptidase activity, with high affinity for N-terminal arginines of various synthetic tripeptides. In addition to its pro-inflammatory EH activity, may also counteract inflammation by its aminopeptidase activity, which inactivates by cleavage another neutrophil attractant, the tripeptide Pro-Gly-Pro (PGP), a bioactive fragment of collagen generated by the action of matrix metalloproteinase-9 (MMP9) and prolylendopeptidase (PREPL). Involved also in the biosynthesis of resolvin E1 and 18S-resolvin E1 from eicosapentaenoic acid, two lipid mediators that show potent anti-inflammatory and pro-resolving actions. The polypeptide is Leukotriene A-4 hydrolase (Lta4h) (Mus musculus (Mouse)).